Reading from the N-terminus, the 219-residue chain is tRNA (guanine-N(7)-)-methyltransferase (219 aa).

S-adenosyl-L-methionine is bound by residues E46, E71, N100, and D122. D122 is an active-site residue. Substrate contacts are provided by residues K126, D158, and 199 to 202; that span reads TEYE.

It belongs to the class I-like SAM-binding methyltransferase superfamily. TrmB family.

The catalysed reaction is guanosine(46) in tRNA + S-adenosyl-L-methionine = N(7)-methylguanosine(46) in tRNA + S-adenosyl-L-homocysteine. The protein operates within tRNA modification; N(7)-methylguanine-tRNA biosynthesis. In terms of biological role, catalyzes the formation of N(7)-methylguanine at position 46 (m7G46) in tRNA. The sequence is that of tRNA (guanine-N(7)-)-methyltransferase from Leuconostoc mesenteroides subsp. mesenteroides (strain ATCC 8293 / DSM 20343 / BCRC 11652 / CCM 1803 / JCM 6124 / NCDO 523 / NBRC 100496 / NCIMB 8023 / NCTC 12954 / NRRL B-1118 / 37Y).